The primary structure comprises 430 residues: Adenylosuccinate synthetase (430 aa).

Residues 12 to 18 (GDEGKGK) and 40 to 42 (GHT) contribute to the GTP site. Catalysis depends on Asp13, which acts as the Proton acceptor. Mg(2+) contacts are provided by Asp13 and Gly40. IMP is bound by residues 13-16 (DEGK), 38-41 (NAGH), Thr130, Arg144, Gln224, and Thr239. Catalysis depends on His41, which acts as the Proton donor. The disordered stretch occupies residues 277–298 (PFPTEQDNETGRKIGERGREFG). Basic and acidic residues predominate over residues 285-296 (ETGRKIGERGRE). 299–305 (TNTGRPR) serves as a coordination point for substrate. Arg303 provides a ligand contact to IMP. GTP contacts are provided by residues Arg305, 331 to 333 (KLD), and 413 to 415 (STS).

It belongs to the adenylosuccinate synthetase family. As to quaternary structure, homodimer. Mg(2+) is required as a cofactor.

It localises to the cytoplasm. It carries out the reaction IMP + L-aspartate + GTP = N(6)-(1,2-dicarboxyethyl)-AMP + GDP + phosphate + 2 H(+). Its pathway is purine metabolism; AMP biosynthesis via de novo pathway; AMP from IMP: step 1/2. Functionally, plays an important role in the de novo pathway of purine nucleotide biosynthesis. Catalyzes the first committed step in the biosynthesis of AMP from IMP. The chain is Adenylosuccinate synthetase from Bradyrhizobium sp. (strain BTAi1 / ATCC BAA-1182).